The following is a 248-amino-acid chain: 1-(5-phosphoribosyl)-5-[(5-phosphoribosylamino)methylideneamino] imidazole-4-carboxamide isomerase (248 aa).

Catalysis depends on aspartate 17, which acts as the Proton acceptor. Catalysis depends on aspartate 136, which acts as the Proton donor.

This sequence belongs to the HisA/HisF family.

Its subcellular location is the cytoplasm. The catalysed reaction is 1-(5-phospho-beta-D-ribosyl)-5-[(5-phospho-beta-D-ribosylamino)methylideneamino]imidazole-4-carboxamide = 5-[(5-phospho-1-deoxy-D-ribulos-1-ylimino)methylamino]-1-(5-phospho-beta-D-ribosyl)imidazole-4-carboxamide. It participates in amino-acid biosynthesis; L-histidine biosynthesis; L-histidine from 5-phospho-alpha-D-ribose 1-diphosphate: step 4/9. This is 1-(5-phosphoribosyl)-5-[(5-phosphoribosylamino)methylideneamino] imidazole-4-carboxamide isomerase from Arthrobacter sp. (strain FB24).